We begin with the raw amino-acid sequence, 346 residues long: tRNA N6-adenosine threonylcarbamoyltransferase (346 aa).

Residues H111 and H115 each contribute to the Fe cation site. Substrate contacts are provided by residues 134-138, D167, G180, D184, and N279; that span reads LVSGG. D307 serves as a coordination point for Fe cation.

This sequence belongs to the KAE1 / TsaD family. It depends on Fe(2+) as a cofactor.

It is found in the cytoplasm. It carries out the reaction L-threonylcarbamoyladenylate + adenosine(37) in tRNA = N(6)-L-threonylcarbamoyladenosine(37) in tRNA + AMP + H(+). Functionally, required for the formation of a threonylcarbamoyl group on adenosine at position 37 (t(6)A37) in tRNAs that read codons beginning with adenine. Is involved in the transfer of the threonylcarbamoyl moiety of threonylcarbamoyl-AMP (TC-AMP) to the N6 group of A37, together with TsaE and TsaB. TsaD likely plays a direct catalytic role in this reaction. In Trichormus variabilis (strain ATCC 29413 / PCC 7937) (Anabaena variabilis), this protein is tRNA N6-adenosine threonylcarbamoyltransferase.